A 546-amino-acid chain; its full sequence is Immunoglobulin heavy constant epsilon (546 aa).

At 1–499 the chain is on the extracellular side; it reads ASTQSPSVFP…EAPWTWTGLC (499 aa). Ig-like domains are found at residues 6–103, 112–210, 214–318, and 324–423; these read PSVF…KTFS, PTVK…KKCA, PRGV…TKTS, and PEVY…RAVS. 5 disulfide bridges follow: Cys15–Cys105, Cys29–Cys85, Cys135–Cys193, Cys239–Cys299, and Cys345–Cys405. 7 N-linked (GlcNAc...) asparagine glycosylation sites follow: Asn21, Asn49, Asn99, Asn146, Asn252, Asn264, and Asn275. The helical transmembrane segment at 500–520 threads the bilayer; it reads IFAALFLLSVSYSAAITLLMV. Residues 521 to 546 are Cytoplasmic-facing; sequence QRFLSATRQGRPQTSLDYTNVLQPHA.

The basic structural unit of both sIgE and mIgE molecules consists of two identical heavy chains and two identical light chains; disulfide-linked. N-terminal variable regions of the heavy and light chains form the antigen binding sites, whereas the C-terminal constant regions of the heavy chains interact with immune receptors to mediate effector functions. In terms of assembly, part of IgE antibody. Interacts (via CH3) with the alpha chain/FCE1RA of IgE Fc receptor complex. Interacts (via CH3 region) with FCER2 (via C-type lectin domain); this interaction regulates IgE homeostasis. As to quaternary structure, part of IgE B cell antigen receptor complex (BCR). The BCR complex consists of one mIgE molecule responsible for antigen binding, non-covalently associated with CD79A and CD79B signaling chains. In terms of tissue distribution, expressed in B lymphocytes stimulated with IL4 and CD40.

Its subcellular location is the secreted. It localises to the cell membrane. Its function is as follows. Constant region of immunoglobulin heavy chains. Immunoglobulins, also known as antibodies, are membrane-bound or secreted glycoproteins produced by B lymphocytes. In the recognition phase of humoral immunity, the membrane-bound immunoglobulins serve as receptors which, upon binding of a specific antigen, trigger the clonal expansion and differentiation of B lymphocytes into immunoglobulins-secreting plasma cells. Secreted immunoglobulins mediate the effector phase of humoral immunity, which results in the elimination of bound antigens. The antigen binding site is formed by the variable domain of one heavy chain, together with that of its associated light chain. Thus, each immunoglobulin has two antigen binding sites with remarkable affinity for a particular antigen. The variable domains are assembled by a process called V-(D)-J rearrangement and can then be subjected to somatic hypermutations which, after exposure to antigen and selection, allow affinity maturation for a particular antigen. Functionally, constant region of secreted IgE, also known as the Fc region of IgE antibody. Mediates IgE effector functions on myeloid and lymphoid cells primarily via two Fc receptors, the high-affinity IgE Fc receptor complex/FCER1A:MS4A2:FCGR1A and the low-affinity FCER2 receptor, which upon antigen/allergen cross-linking initiate signaling pathways that lead to immune cell activation and differentiation. Triggers the immediate hypersensitivity response to allergens as a host defense mechanism against helminth parasites, pathogenic bacteria and venom toxicity. When dysregulated, it can elicit harmful life-threatening allergic and anaphylactic reactions. Stimulates the high-affinity IgE Fc receptor complex/FCER1A:MS4A2:FCGR1A on mast cells, basophils and eosinophils leading to secretion of vasoactive amines, lipid mediators and cytokines that contribute to inflammatory response, tissue remodeling and cytotoxicity against microbes. On macrophages, cross-linking of FCER2 by IgE immune complexes induces intracellular killing of parasites through activation of L-Arginine-nitric oxide pathway. Activates macrophages to kill tumor cells via antigen-specific antibody-dependent cytotoxicity (ADCC). Triggers differentiation of quiescent M0 macrophages toward M1 state and reprograms M2 macrophages toward a proinflammatory state with antitumor functions. Stimulates FCER2 on B cells and initiates IgE-dependent antigen uptake and presentation to T cells. In terms of biological role, constant region of membrane-bound IgE (long mIgE), part of the B cell receptor complex (BCR). Upon antigen cross-linking triggers quick BCR signaling, ensuring survival of IgE-switched B cells and differentiation into plasma cells, thus regulating both primary and memory IgE responses. Constant region of membrane-bound IgE (short mIgE), part of the B cell receptor complex (BCR). Upon antigen cross-linking initiates slower but sustained BCR signaling that negatively regulates mature B cell proliferation. The sequence is that of Immunoglobulin heavy constant epsilon from Homo sapiens (Human).